Here is a 344-residue protein sequence, read N- to C-terminus: Neurotrimin (344 aa).

The signal sequence occupies residues 1–33; the sequence is MGVCGYLFLPWKCLVVVSLRLLFLVPTGVPVRS. Ig-like C2-type domains are found at residues 39–126, 136–218, and 222–309; these read PKAM…PKTS, PKIV…VKVT, and PPYI…ASIM. N-linked (GlcNAc...) asparagine glycans are attached at residues Asn-44, Asn-70, and Asn-152. Cys-57 and Cys-115 are oxidised to a cystine. 2 disulfide bridges follow: Cys-157–Cys-201 and Cys-243–Cys-295. Asn-284, Asn-292, and Asn-305 each carry an N-linked (GlcNAc...) asparagine glycan. A lipid anchor (GPI-anchor amidated asparagine; alternate) is attached at Asn-321. Residue Asn-321 is glycosylated (N-linked (GlcNAc...) asparagine; alternate). Residues 322–344 constitute a propeptide, removed in mature form; that stretch reads GTSRRAGCIWLLPLLVLHLLLKF.

This sequence belongs to the immunoglobulin superfamily. IgLON family.

Its subcellular location is the cell membrane. Neural cell adhesion molecule. This chain is Neurotrimin (Ntm), found in Mus musculus (Mouse).